We begin with the raw amino-acid sequence, 207 residues long: Large ribosomal subunit protein uL4 (207 aa).

The segment at 49 to 78 is disordered; the sequence is HAVKNRSAVSGGGRKPWRQKGTGRARQGSI.

It belongs to the universal ribosomal protein uL4 family. As to quaternary structure, part of the 50S ribosomal subunit.

In terms of biological role, one of the primary rRNA binding proteins, this protein initially binds near the 5'-end of the 23S rRNA. It is important during the early stages of 50S assembly. It makes multiple contacts with different domains of the 23S rRNA in the assembled 50S subunit and ribosome. Its function is as follows. Forms part of the polypeptide exit tunnel. The polypeptide is Large ribosomal subunit protein uL4 (Streptococcus agalactiae serotype Ia (strain ATCC 27591 / A909 / CDC SS700)).